Here is a 536-residue protein sequence, read N- to C-terminus: Arylsulfatase K (536 aa).

A signal peptide spans 1–22; sequence MLLLWVSVVAALALAVLAPGAG. D40 and C80 together coordinate Ca(2+). The active-site Nucleophile is C80. The residue at position 80 (C80) is a 3-oxoalanine (Cys). N108 carries an N-linked (GlcNAc...) asparagine glycan. Position 128 (K128) interacts with substrate. 2 N-linked (GlcNAc...) asparagine glycosylation sites follow: N166 and N193. Residue H251 coordinates substrate. N262 carries N-linked (GlcNAc...) asparagine glycosylation. Residues D313 and H314 each contribute to the Ca(2+) site. N375, N413, and N498 each carry an N-linked (GlcNAc...) asparagine glycan.

It belongs to the sulfatase family. Ca(2+) serves as cofactor. The conversion to 3-oxoalanine (also known as C-formylglycine, FGly), of a serine or cysteine residue in prokaryotes and of a cysteine residue in eukaryotes, is critical for catalytic activity. Post-translationally, the 75-kDa precursor undergoes proteolytic processing to yield a 23 kDa form. In terms of processing, N-glycosylated with both high mannose and complex type sugars. In terms of tissue distribution, expressed at high levels in the placenta and pancreas. Expressed at intermediate levels in the lung, brain, heart, liver and kidney and at low levels in the muscle.

The protein resides in the secreted. It is found in the lysosome. It carries out the reaction an aryl sulfate + H2O = a phenol + sulfate + H(+). The enzyme catalyses Hydrolysis of the 2-sulfate groups of the 2-O-sulfo-D-glucuronate residues of chondroitin sulfate, heparin and heparitin sulfate.. Its function is as follows. Catalyzes the hydrolysis of pseudosubstrates such as p-nitrocatechol sulfate and p-nitrophenyl sulfate. Catalyzes the hydrolysis of the 2-sulfate groups of the 2-O-sulfo-D-glucuronate residues of chondroitin sulfate, heparin and heparitin sulfate. Acts selectively on 2-sulfoglucuronate and lacks activity against 2-sulfoiduronate. The sequence is that of Arylsulfatase K (ARSK) from Homo sapiens (Human).